The primary structure comprises 731 residues: Probable G-protein coupled receptor 149 (731 aa).

Topologically, residues 1 to 35 are extracellular; that stretch reads MSLFLSNLSTNDSSLWKENHNSTDLLNPPGTLNIY. Asn7, Asn11, and Asn21 each carry an N-linked (GlcNAc...) asparagine glycan. Residues 36–56 form a helical membrane-spanning segment; sequence LFCLTCLMTFAALVGSIYSLI. Topologically, residues 57–69 are cytoplasmic; sequence SLLKMQNRTVVSM. Residues 70 to 90 traverse the membrane as a helical segment; that stretch reads LVASWSVDDLMSVLSVTIFMF. At 91–109 the chain is on the extracellular side; the sequence is LQWPNEVPGYFQFLCTTSA. Cysteines 105 and 182 form a disulfide. The helical transmembrane segment at 110–132 threads the bilayer; it reads LMYLCQGLSSNLKATLLVSYNFY. The Cytoplasmic portion of the chain corresponds to 133 to 155; sequence TMHRGVGSQTASRRSGQVLGVVL. A helical membrane pass occupies residues 156 to 176; that stretch reads TVWAASLLLSALPLCGWGAFV. Topologically, residues 177-189 are extracellular; it reads RTPWGCLVDCSSS. The chain crosses the membrane as a helical span at residues 190 to 210; it reads YVLFLSIVYALAFGLLVGLSV. The Cytoplasmic segment spans residues 211 to 310; it reads PLTHRLLCSE…SFTVSVAQKR (100 aa). The tract at residues 234 to 271 is disordered; sequence RGASIPGTPPTAGRVVSLSPEDAPGPSLRRSGGCSPSS. Residues 311 to 331 form a helical membrane-spanning segment; the sequence is FALILALTKVVLWLPMMMHMV. Residues 332 to 342 are Extracellular-facing; sequence VQNVVGFQSLP. A helical membrane pass occupies residues 343-363; sequence LETFSFLLTLLATTVTPVFVL. At 364–731 the chain is on the cytoplasmic side; that stretch reads SKRWTHLPCG…RKREEESKGS (368 aa). The interval 475-526 is disordered; it reads NTDITEAKQDSNNKKDAFSDKTGGDINYEETTFSEGPERRLSHEESQKPDLS. Composition is skewed to basic and acidic residues over residues 479–497 and 510–526; these read TEAK…DKTG and GPER…PDLS.

It belongs to the G-protein coupled receptor 1 family.

It localises to the cell membrane. Its function is as follows. Orphan receptor. This Homo sapiens (Human) protein is Probable G-protein coupled receptor 149 (GPR149).